The primary structure comprises 119 residues: Large ribosomal subunit protein bL19 (119 aa).

The protein belongs to the bacterial ribosomal protein bL19 family.

Functionally, this protein is located at the 30S-50S ribosomal subunit interface and may play a role in the structure and function of the aminoacyl-tRNA binding site. The polypeptide is Large ribosomal subunit protein bL19 (Leuconostoc citreum (strain KM20)).